A 390-amino-acid polypeptide reads, in one-letter code: Putative nickel insertion protein (390 aa).

It belongs to the LarC family.

This Geotalea uraniireducens (strain Rf4) (Geobacter uraniireducens) protein is Putative nickel insertion protein.